A 151-amino-acid polypeptide reads, in one-letter code: C-C motif chemokine 25 (151 aa).

Positions 1–22 (MNLWLLVCLVASLMGAWSTVHT) are cleaved as a signal peptide. 2 cysteine pairs are disulfide-bonded: cysteine 29-cysteine 57 and cysteine 30-cysteine 73. Residues 94 to 151 (THSKQHLGSRRNLQDSHLGGQRSNTGMSRLAHSKSKSSRSTRSNKKKTSFLNMANPGP) are disordered. Residues 124–141 (AHSKSKSSRSTRSNKKKT) show a composition bias toward basic residues.

It belongs to the intercrine beta (chemokine CC) family.

Its subcellular location is the secreted. Potentially involved in T-cell development. Recombinant protein shows chemotactic activity on thymocytes, macrophages, THP-1 cells, and dendritics cells but is inactive on peripheral blood lymphocytes and neutrophils. Binds to CCR9. Binds to atypical chemokine receptor ACKR4 and mediates the recruitment of beta-arrestin (ARRB1/2) to ACKR4. The protein is C-C motif chemokine 25 (CCL25) of Canis lupus familiaris (Dog).